The sequence spans 249 residues: MRILISNDDGATAPGLAALYAALEDYAECVVVAPDQDKSGASSSLTLDRPLHPKVLANGFISVNGTPTDCVHLAINSLLDHEPDLVVSGINLGANLGDDVLYSGTVAAALEGRFLGRTAFAFSFASRQLDNLPTAAYFARKLVEAHATLDLPPRTVLNVNIPNLPLDHIRGIQLTRLGHRARAAAPLKVVDPRGKEGYWIAAAGDAEDGGEGTDFHAVMQGYVSITPLQFDRTFSDAFSGLDGWLEGLR.

Positions 8, 9, 39, and 91 each coordinate a divalent metal cation.

This sequence belongs to the SurE nucleotidase family. A divalent metal cation is required as a cofactor.

Its subcellular location is the cytoplasm. It carries out the reaction a ribonucleoside 5'-phosphate + H2O = a ribonucleoside + phosphate. Its function is as follows. Nucleotidase that shows phosphatase activity on nucleoside 5'-monophosphates. The polypeptide is 5'-nucleotidase SurE (Pseudomonas fluorescens (strain SBW25)).